A 627-amino-acid polypeptide reads, in one-letter code: Glutamine--fructose-6-phosphate aminotransferase [isomerizing] (627 aa).

The Nucleophile; for GATase activity role is filled by Cys2. The Glutamine amidotransferase type-2 domain occupies 2–224; that stretch reads CGIVGYIGTQ…NGEIARLTPL (223 aa). SIS domains are found at residues 293–442 and 476–617; these read LPEN…HRQT and LAHE…VDQP. The active-site For Fru-6P isomerization activity is the Lys622.

In terms of assembly, homodimer.

It localises to the cytoplasm. It carries out the reaction D-fructose 6-phosphate + L-glutamine = D-glucosamine 6-phosphate + L-glutamate. Functionally, catalyzes the first step in hexosamine metabolism, converting fructose-6P into glucosamine-6P using glutamine as a nitrogen source. The protein is Glutamine--fructose-6-phosphate aminotransferase [isomerizing] of Nostoc sp. (strain PCC 9229).